A 432-amino-acid chain; its full sequence is Glycosyltransferase 6 (432 aa).

Residues 1–18 (MGKPGGAKTRTAVCLSDG) are Cytoplasmic-facing. The helical; Signal-anchor for type II membrane protein transmembrane segment at 19–39 (VFFLAGAFMSLTLVWSYFSIF) threads the bilayer. The Lumenal portion of the chain corresponds to 40 to 432 (SPSFTSLRHD…LPFDYPNEAW (393 aa)). N-linked (GlcNAc...) asparagine glycosylation occurs at N315.

It belongs to the glycosyltransferase 34 family.

Its subcellular location is the golgi apparatus membrane. Functionally, probable glycosyltransferase that may be involved in the biosynthesis of xyloglucan. The protein is Glycosyltransferase 6 (GT6) of Arabidopsis thaliana (Mouse-ear cress).